The chain runs to 396 residues: Elongation factor Tu 2 (396 aa).

The 197-residue stretch at 10-206 (KPHCNIGTIG…TVDAYIPQPD (197 aa)) folds into the tr-type G domain. The segment at 19–26 (GHVDHGKT) is G1. GTP is bound at residue 19–26 (GHVDHGKT). T26 serves as a coordination point for Mg(2+). Positions 60-64 (GITIN) are G2. Positions 81–84 (DCPG) are G3. GTP contacts are provided by residues 81–85 (DCPGH) and 136–139 (NKVD). Positions 136–139 (NKVD) are G4. The G5 stretch occupies residues 174–176 (SAK).

Belongs to the TRAFAC class translation factor GTPase superfamily. Classic translation factor GTPase family. EF-Tu/EF-1A subfamily. In terms of assembly, monomer.

It is found in the cytoplasm. The enzyme catalyses GTP + H2O = GDP + phosphate + H(+). In terms of biological role, GTP hydrolase that promotes the GTP-dependent binding of aminoacyl-tRNA to the A-site of ribosomes during protein biosynthesis. The protein is Elongation factor Tu 2 of Caulobacter sp. (strain K31).